The primary structure comprises 293 residues: Elongation factor Ts (293 aa).

Residues 81 to 84 (TDFV) form an involved in Mg(2+) ion dislocation from EF-Tu region.

Belongs to the EF-Ts family.

The protein localises to the cytoplasm. Associates with the EF-Tu.GDP complex and induces the exchange of GDP to GTP. It remains bound to the aminoacyl-tRNA.EF-Tu.GTP complex up to the GTP hydrolysis stage on the ribosome. The protein is Elongation factor Ts of Teredinibacter turnerae (strain ATCC 39867 / T7901).